Here is a 957-residue protein sequence, read N- to C-terminus: SLIT and NTRK-like protein 5 (957 aa).

The first 40 residues, 1–40 (MHVCCPPVTLEQDLHRKMHSWMLQTLAFAVTSLVLSCAET), serve as a signal peptide directing secretion. Residues 41–664 (IDYYGEICDN…GTGASSVPLS (624 aa)) lie on the Extracellular side of the membrane. LRR repeat units follow at residues 82–103 (PIYHLLLSGNLLSRLYPNEFVN), 106–127 (GASILHLGSNVIQDIETGAFHG), 130–151 (GLRRLHLNNNKLELLRDDTFLG), 154–175 (NLEYLQVDYNYISVIEPNAFGK), 178–199 (MLQVLILNDNLLSGLPNNLFRF), and 201–222 (PLTHLDLRGNRLKLLPYVGLLQ). The N-linked (GlcNAc...) asparagine glycan is linked to N103. In terms of domain architecture, LRRCT 1 spans 235–286 (NPWNCSCELISLKDWLDSISYSALVGDVVCETPFRLHGRDLDEVSKQELCPR). The disordered stretch occupies residues 317 to 358 (ATSSSAVYKPPLKPPKGTRQPNKPRVRPTSRQPSKDLGYSNY). The LRRNT domain occupies 365–407 (QTKSPVPLECPTACTCNLQISDLGLNVNCQERKIESIAELQPK). 6 LRR repeats span residues 410 to 431 (NPKKMYLTENYITVVRRTDFLE), 434 to 455 (GLDLLHLGNNRISMIQDRAFGD), 458 to 479 (NLRRLYLNGNRIERLSPELFYG), 482 to 503 (SLQYLFLQYNLIREIQAGTFDP), 506 to 527 (NLQLLFLNNNQLQAMPSGVFSG), and 529 to 550 (TLLRLNLRGNSFTSLPVSGVLD). One can recognise an LRRCT 2 domain in the interval 563–614 (NPWDCTCDVVGMKLWIEQLKVGVLVDEVICKAPKKFAETYMRSIKSELLCPD). The span at 623–632 (PTPSSIQVPS) shows a compositional bias: low complexity. The tract at residues 623 to 642 (PTPSSIQVPSRTNAATPAVR) is disordered. The N-linked (GlcNAc...) asparagine glycan is linked to N644. Residues 665-685 (VLILSLLLVFIMSVFVAAGLF) traverse the membrane as a helical segment. Residues 686–957 (VLVMKRRKKN…LEKQTTFSQF (272 aa)) lie on the Cytoplasmic side of the membrane. Residues 789 to 844 (SNHHLQQQPPPPPQQPQQQPPPQMQMQPGEEERRESHHLRSPAYSVSTIEPREDLL) are disordered. Over residues 796–811 (QPPPPPQQPQQQPPPQ) the composition is skewed to pro residues.

This sequence belongs to the SLITRK family. In the adult, significant expression is detected only in the brain. In the embryo, expressed in the subventricular zone, cortical plate, pyramidal layer of hippocampus, thalamus and hypothalamus.

It localises to the membrane. Its function is as follows. Suppresses neurite outgrowth. In Mus musculus (Mouse), this protein is SLIT and NTRK-like protein 5 (Slitrk5).